A 116-amino-acid chain; its full sequence is NADH-ubiquinone oxidoreductase chain 3 (116 aa).

3 helical membrane passes run 3-23, 56-76, and 87-107; these read LIMT…TVSF, FFLV…LLPL, and GTFF…IYEW.

Belongs to the complex I subunit 3 family.

Its subcellular location is the mitochondrion membrane. It catalyses the reaction a ubiquinone + NADH + 5 H(+)(in) = a ubiquinol + NAD(+) + 4 H(+)(out). Functionally, core subunit of the mitochondrial membrane respiratory chain NADH dehydrogenase (Complex I) that is believed to belong to the minimal assembly required for catalysis. Complex I functions in the transfer of electrons from NADH to the respiratory chain. The immediate electron acceptor for the enzyme is believed to be ubiquinone. This is NADH-ubiquinone oxidoreductase chain 3 (MT-ND3) from Carassius auratus (Goldfish).